The following is a 151-amino-acid chain: Large ribosomal subunit protein uL22 (151 aa).

Belongs to the universal ribosomal protein uL22 family. As to quaternary structure, part of the 50S ribosomal subunit.

This protein binds specifically to 23S rRNA. It makes multiple contacts with different domains of the 23S rRNA in the assembled 50S subunit and ribosome. Functionally, the globular domain of the protein is located near the polypeptide exit tunnel on the outside of the subunit, while an extended beta-hairpin is found that lines the wall of the exit tunnel in the center of the 70S ribosome. This chain is Large ribosomal subunit protein uL22, found in Methanococcoides burtonii (strain DSM 6242 / NBRC 107633 / OCM 468 / ACE-M).